Reading from the N-terminus, the 146-residue chain is 3-dehydroquinate dehydratase (146 aa).

Tyr24 acts as the Proton acceptor in catalysis. Residues Asn75, His81, and Asp88 each coordinate substrate. The Proton donor role is filled by His101. Substrate is bound by residues 102–103 (LS) and Arg112.

The protein belongs to the type-II 3-dehydroquinase family. In terms of assembly, homododecamer.

The catalysed reaction is 3-dehydroquinate = 3-dehydroshikimate + H2O. It participates in metabolic intermediate biosynthesis; chorismate biosynthesis; chorismate from D-erythrose 4-phosphate and phosphoenolpyruvate: step 3/7. Functionally, catalyzes a trans-dehydration via an enolate intermediate. The polypeptide is 3-dehydroquinate dehydratase (Caulobacter vibrioides (strain ATCC 19089 / CIP 103742 / CB 15) (Caulobacter crescentus)).